Consider the following 1710-residue polypeptide: Neurexin-2 (1710 aa).

A signal peptide spans 1-28 (MALGSRWQPPPQLPPLLLLLALAAGVRG). The region spanning 29–206 (LEFGGGPGQW…LRGAAADPLC (178 aa)) is the Laminin G-like 1 domain. Over 29–1634 (LEFGGGPGQW…EVIRESSSTT (1606 aa)) the chain is Extracellular. Asparagine 60 carries N-linked (GlcNAc...) asparagine glycosylation. An EGF-like 1 domain is found at 202–242 (ADPLCAPARNPCANGGLCTVLAPGEVGCDCSHTGFGGKFCS). Disulfide bonds link cysteine 206/cysteine 219, cysteine 213/cysteine 229, and cysteine 231/cysteine 241. Laminin G-like domains lie at 289–486 (VATF…SFRC) and 493–686 (DPVT…APFC). Aspartate 335 provides a ligand contact to Ca(2+). Asparagine 338 carries N-linked (GlcNAc...) asparagine glycosylation. 2 residues coordinate Ca(2+): leucine 352 and methionine 420. Intrachain disulfides connect cysteine 450–cysteine 486, cysteine 657–cysteine 686, cysteine 694–cysteine 705, cysteine 699–cysteine 714, and cysteine 716–cysteine 726. Residues 690 to 727 (TLKQCASAPCRNGGICREGWNRFVCDCIGTGFLGRVCE) form the EGF-like 2 domain. Laminin G-like domains follow at residues 732-904 (VLSY…ITYC) and 918-1093 (DPVT…ERGC). Ca(2+)-binding residues include aspartate 779 and leucine 796. N-linked (GlcNAc...) asparagine glycosylation occurs at asparagine 841. Arginine 854 lines the Ca(2+) pocket. 4 disulfides stabilise this stretch: cysteine 1065–cysteine 1093, cysteine 1100–cysteine 1111, cysteine 1105–cysteine 1120, and cysteine 1122–cysteine 1132. The 38-residue stretch at 1096-1133 (PSTTCTEESCANQGVCLQQWDGFTCDCTMTSYGGPVCN) folds into the EGF-like 3 domain. The 209-residue stretch at 1137-1345 (TTYIFGKGGA…HLRLVGEGPS (209 aa)) folds into the Laminin G-like 6 domain. Ca(2+) contacts are provided by aspartate 1189, valine 1206, isoleucine 1288, and asparagine 1290. The O-linked (Xyl...) (heparan sulfate) serine glycan is linked to serine 1400. Disordered stretches follow at residues 1458–1508 (ATQD…LPPT) and 1587–1621 (EPRRPPPLRPGVTSAPGFPRLPTANPTGPGERGPP). A helical membrane pass occupies residues 1635-1655 (GMVVGIVAAAALCILILLYAM). Residues 1656-1710 (YKYRNRDEGSYQVDQSRNYISNSAQSNGAVVKEKAPAAPKTPSKAKKNKDKEYYV) lie on the Cytoplasmic side of the membrane. A disordered region spans residues 1677-1710 (NSAQSNGAVVKEKAPAAPKTPSKAKKNKDKEYYV).

The laminin G-like domain 1 binds to NXPH1. Interacts with PATJ. Interacts with CBLN1, CBLN2 and, less avidly, with CBLN4. Specific isoforms bind neuroligins NLGN1, NLGN2 and NLGN3. Specific isoforms bind to alpha-dystroglycan. Interacts (via Laminin G-like 1 domain) with IGSF21 (Ig-like 1 domain) in a trans-interaction manner. Interacts with CLSTN3. In terms of processing, O-glycosylated; contains heparan sulfate. Heparan sulfate attachment is required for synapse development by mediating interactions with neuroligins.

The protein resides in the presynaptic cell membrane. Its function is as follows. Neuronal cell surface protein that may be involved in cell recognition and cell adhesion. May mediate intracellular signaling. The chain is Neurexin-2 from Mus musculus (Mouse).